The following is a 294-amino-acid chain: Probable endonuclease 4 (294 aa).

Positions 78, 118, 157, 191, 194, 228, 241, 243, and 273 each coordinate Zn(2+).

This sequence belongs to the AP endonuclease 2 family. The cofactor is Zn(2+).

The catalysed reaction is Endonucleolytic cleavage to 5'-phosphooligonucleotide end-products.. Its function is as follows. Endonuclease IV plays a role in DNA repair. It cleaves phosphodiester bonds at apurinic or apyrimidinic (AP) sites, generating a 3'-hydroxyl group and a 5'-terminal sugar phosphate. This is Probable endonuclease 4 from Streptomyces coelicolor (strain ATCC BAA-471 / A3(2) / M145).